A 95-amino-acid chain; its full sequence is Integration host factor subunit beta (95 aa).

The interval 56–76 (RAPRTGRNPKTGSSVDLEGKY) is disordered.

It belongs to the bacterial histone-like protein family. In terms of assembly, heterodimer of an alpha and a beta chain.

Its function is as follows. This protein is one of the two subunits of integration host factor, a specific DNA-binding protein that functions in genetic recombination as well as in transcriptional and translational control. This is Integration host factor subunit beta from Shewanella baltica (strain OS223).